Here is a 414-residue protein sequence, read N- to C-terminus: MVLGKVKSLTISFDCLNDSNVPVYSSGDTVSGRVNLEVTGEIRVKSLKIHARGHAKVRWTESRNAGSNTAYTQNYTEEVEYFNHKDILIGHERDDDNSEEGFHTIHSGRHEYAFSFELPQTPLATSFEGRHGSVRYWVKAELHRPWLLPVKLKKEFTVFEHIDINTPSLLSPQAGTKEKTLCCWFCTSGPISLSAKIERKGYTPGESIQIYAEIENCSSRMVVPKAAIYQTQAFYAKGKMKEVKQLVANLRGESLSSGKTETWNGKLLKIPPVSPSILDCSIIRVEYSLMVYVDIPGAMDLFLNLPLVIGTIPLHPFGSRTSSVSSQCSMNMNWLSLSLPERPEAPPSYAEVVTEEQRRNNLAPVSACDDFERALQGPLFAYIQEFRFLPPPLYSEIDPNPDQSADDRPSCPSR.

2 consecutive short sequence motifs (PPxY motif) follow at residues 346 to 349 (PPSY) and 391 to 394 (PPLY). Residues 393–414 (LYSEIDPNPDQSADDRPSCPSR) form a disordered region. Positions 405-414 (ADDRPSCPSR) are enriched in basic and acidic residues.

It belongs to the arrestin family. In terms of assembly, interacts (via PPxY motifs) with NEDD4 (via WW domains). Interacts with ADRB2. Interacts with ADRB3. Interacts with HGS (via PPxY motifs). Does not bind TXN (thioredoxin). Interacts with ITCH.

The protein resides in the cytoplasm. It localises to the cell membrane. Its subcellular location is the lysosome. The protein localises to the endosome. It is found in the early endosome. Its function is as follows. Adapter protein that plays a role in regulating cell-surface expression of adrenergic receptors and probably also other G protein-coupled receptors. Plays a role in NEDD4-mediated ubiquitination and endocytosis af activated ADRB2 and subsequent ADRB2 degradation. May recruit NEDD4 to ADRB2. Alternatively, may function as adapter protein that does not play a major role in recruiting NEDD4 to ADRB2, but rather plays a role in a targeting ADRB2 to endosomes. The sequence is that of Arrestin domain-containing protein 3 (ARRDC3) from Pongo abelii (Sumatran orangutan).